Consider the following 460-residue polypeptide: Muscarinic acetylcholine receptor M1 (460 aa).

Residues 1–22 (MNTSVPPAVSPNITVLAPGKGP) lie on the Extracellular side of the membrane. Asn-2 and Asn-12 each carry an N-linked (GlcNAc...) asparagine glycan. A helical transmembrane segment spans residues 23 to 48 (WQVAFIGITTGLLSLATVTGNLLVLI). Residues 49–62 (SFKVNTELKTVNNY) are Cytoplasmic-facing. A helical membrane pass occupies residues 63 to 84 (FLLSLACADLIIGTFSMNLYTT). Residues 85–95 (YLLMGHWALGT) lie on the Extracellular side of the membrane. A helical membrane pass occupies residues 96–121 (LACDLWLALDYVASNASVMNLLLISF). Cys-98 and Cys-178 form a disulfide bridge. Residues 122–142 (DRYFSVTRPLSYRAKRTPRRA) lie on the Cytoplasmic side of the membrane. The chain crosses the membrane as a helical span at residues 143–164 (ALMIGLAWLVSFVLWAPAILFW). Residues 165 to 185 (QYLVGERTVLAGQCYIQFLSQ) are Extracellular-facing. Residues 186–209 (PIITFGTAMAAFYLPVTVMCTLYW) traverse the membrane as a helical segment. Over 210–366 (RIYRETENRA…LVKEKKAART (157 aa)) the chain is Cytoplasmic. Disordered regions lie at residues 225-257 (LQGSETPGKGGGSSSSSERSQPGAEGSPESPPG), 274-297 (WKEEEEEDEGSMESLTSSEGEEPG), and 310-351 (EAQA…QLAK). Residue Thr-230 is modified to Phosphothreonine. Low complexity predominate over residues 238 to 257 (SSSSERSQPGAEGSPESPPG). Ser-254 is modified (phosphoserine). Over residues 328–343 (RPTKKGRDRGGKGQKP) the composition is skewed to basic residues. A helical transmembrane segment spans residues 367–390 (LSAILLAFILTWTPYNIMVLVSTF). The Extracellular portion of the chain corresponds to 391–397 (CKDCVPE). The chain crosses the membrane as a helical span at residues 398–420 (TLWELGYWLCYVNSTVNPMCYAL). Residues 421–460 (CNKAFRDTFRLLLLCRWDKRRWRKIPKRPGSVHRTPSRQC) lie on the Cytoplasmic side of the membrane. Ser-451 is modified (phosphoserine). Thr-455 bears the Phosphothreonine mark. Ser-457 is modified (phosphoserine).

This sequence belongs to the G-protein coupled receptor 1 family. Muscarinic acetylcholine receptor subfamily. CHRM1 sub-subfamily. As to quaternary structure, interacts with GPRASP2. Interacts with TMEM147.

The protein localises to the cell membrane. It localises to the postsynaptic cell membrane. In terms of biological role, the muscarinic acetylcholine receptor mediates various cellular responses, including inhibition of adenylate cyclase, breakdown of phosphoinositides and modulation of potassium channels through the action of G proteins. Primary transducing effect is Pi turnover. The polypeptide is Muscarinic acetylcholine receptor M1 (Chrm1) (Mus musculus (Mouse)).